A 546-amino-acid chain; its full sequence is Cytochrome P450 monooxygenase alnH (546 aa).

Residues 11-31 form a helical membrane-spanning segment; the sequence is VPYSVPLLGSTVVILIGFIAI. Residues asparagine 146, asparagine 258, and asparagine 425 are each glycosylated (N-linked (GlcNAc...) asparagine). Residue cysteine 445 participates in heme binding.

It belongs to the cytochrome P450 family. It depends on heme as a cofactor.

Its subcellular location is the membrane. It participates in polyketide biosynthesis. Its function is as follows. Cytochrome P450 monooxygenase; part of the gene cluster that mediates the biosynthesis of asperlin, a polyketide showing anti-inflammatory, antitumor and antibiotic activities. The first step of the asperlin biosynthesis is the production of the intermediate 2,4,6-octatrienoic acid by the highly redusing polyketide synthase alnA with cleavage of the PKS product by the esterase alnB. 2,4,6-octatrienoic acid is further converted to asperlin via several steps involving the remaining enzymes from the cluster. This is Cytochrome P450 monooxygenase alnH from Emericella nidulans (strain FGSC A4 / ATCC 38163 / CBS 112.46 / NRRL 194 / M139) (Aspergillus nidulans).